The chain runs to 224 residues: Octanoyltransferase (224 aa).

A BPL/LPL catalytic domain is found at G33 to A213. The tract at residues G51–R71 is disordered. Substrate contacts are provided by residues R71–H78, A143–G145, and G156–A158. The Acyl-thioester intermediate role is filled by C174.

It belongs to the LipB family.

It localises to the cytoplasm. It catalyses the reaction octanoyl-[ACP] + L-lysyl-[protein] = N(6)-octanoyl-L-lysyl-[protein] + holo-[ACP] + H(+). The protein operates within protein modification; protein lipoylation via endogenous pathway; protein N(6)-(lipoyl)lysine from octanoyl-[acyl-carrier-protein]: step 1/2. Catalyzes the transfer of endogenously produced octanoic acid from octanoyl-acyl-carrier-protein onto the lipoyl domains of lipoate-dependent enzymes. Lipoyl-ACP can also act as a substrate although octanoyl-ACP is likely to be the physiological substrate. The sequence is that of Octanoyltransferase from Leifsonia xyli subsp. xyli (strain CTCB07).